Consider the following 177-residue polypeptide: Alkyl hydroperoxide reductase AhpD (177 aa).

The active-site Proton donor is Cys130. Cys130 and Cys133 are joined by a disulfide. Catalysis depends on Cys133, which acts as the Cysteine sulfenic acid (-SOH) intermediate.

The protein belongs to the AhpD family. As to quaternary structure, homotrimer.

It catalyses the reaction N(6)-[(R)-dihydrolipoyl]-L-lysyl-[lipoyl-carrier protein] + a hydroperoxide = N(6)-[(R)-lipoyl]-L-lysyl-[lipoyl-carrier protein] + an alcohol + H2O. Functionally, antioxidant protein with alkyl hydroperoxidase activity. Required for the reduction of the AhpC active site cysteine residues and for the regeneration of the AhpC enzyme activity. The sequence is that of Alkyl hydroperoxide reductase AhpD from Corynebacterium aurimucosum (strain ATCC 700975 / DSM 44827 / CIP 107346 / CN-1) (Corynebacterium nigricans).